The chain runs to 79 residues: uncharacterized protein (79 aa).

A helical transmembrane segment spans residues 53–73 (LFFAYMVAYIGFGILSIGMIV).

The protein resides in the membrane. This is an uncharacterized protein from Escherichia coli O157:H7.